Here is a 214-residue protein sequence, read N- to C-terminus: Transcription factor MYB24 (214 aa).

2 consecutive HTH myb-type domains span residues 14–66 (DAEV…LNYL) and 67–121 (RPDV…QKYI). 2 consecutive DNA-binding regions (H-T-H motif) follow at residues 42–66 (WNSLAKSAGLKRTGKSCRLRWLNYL) and 94–117 (WSKIAKHLPGRTDNEIKNFWRTKI).

In terms of assembly, interacts (via N-terminus) with TIFY10A/JAZ1, TIFY5A/JAZ8 AND TIFY3A/JAZ11. Expressed specifically in flowers. Expressed in all four whorls of the flower and in the vascular tissue of stamen filament and sepals. Detected in male and female gametophytes, especially in microspores and ovules. Weakly expressed in petals and the upper part of pistils.

Its subcellular location is the nucleus. In terms of biological role, transcription factor acting redundantly with MYB21 and MYB57 to control stamen filament elongation in the late developed flowers. Contributes with MYB21 to induction of MYB108 by jasmonate. Repressed at the transcript levels by DELLA proteins. The sequence is that of Transcription factor MYB24 (MYB24) from Arabidopsis thaliana (Mouse-ear cress).